We begin with the raw amino-acid sequence, 180 residues long: Flavin prenyltransferase UbiX (180 aa).

Residues 9–11, S33, 84–87, and R119 contribute to the FMN site; these read GAS and SITT. Residues Y149 and R165 each coordinate dimethylallyl phosphate.

The protein belongs to the UbiX/PAD1 family.

It catalyses the reaction dimethylallyl phosphate + FMNH2 = prenylated FMNH2 + phosphate. In terms of biological role, flavin prenyltransferase that catalyzes the synthesis of the prenylated FMN cofactor (prenyl-FMN) for 4-hydroxy-3-polyprenylbenzoic acid decarboxylase UbiD. The prenyltransferase is metal-independent and links a dimethylallyl moiety from dimethylallyl monophosphate (DMAP) to the flavin N5 and C6 atoms of FMN. In Thermoplasma acidophilum (strain ATCC 25905 / DSM 1728 / JCM 9062 / NBRC 15155 / AMRC-C165), this protein is Flavin prenyltransferase UbiX.